A 278-amino-acid polypeptide reads, in one-letter code: 4-hydroxy-3-methylbut-2-enyl diphosphate reductase (278 aa).

C12 is a binding site for [4Fe-4S] cluster. Residues H36 and H70 each contribute to the (2E)-4-hydroxy-3-methylbut-2-enyl diphosphate site. H36 and H70 together coordinate dimethylallyl diphosphate. H36 and H70 together coordinate isopentenyl diphosphate. [4Fe-4S] cluster is bound at residue C92. (2E)-4-hydroxy-3-methylbut-2-enyl diphosphate is bound at residue H120. Residue H120 participates in dimethylallyl diphosphate binding. Residue H120 participates in isopentenyl diphosphate binding. Residue E122 is the Proton donor of the active site. T158 lines the (2E)-4-hydroxy-3-methylbut-2-enyl diphosphate pocket. Position 186 (C186) interacts with [4Fe-4S] cluster. (2E)-4-hydroxy-3-methylbut-2-enyl diphosphate contacts are provided by S214, N216, and S258. S214, N216, and S258 together coordinate dimethylallyl diphosphate. Isopentenyl diphosphate contacts are provided by S214, N216, and S258.

Belongs to the IspH family. [4Fe-4S] cluster serves as cofactor.

It carries out the reaction isopentenyl diphosphate + 2 oxidized [2Fe-2S]-[ferredoxin] + H2O = (2E)-4-hydroxy-3-methylbut-2-enyl diphosphate + 2 reduced [2Fe-2S]-[ferredoxin] + 2 H(+). It catalyses the reaction dimethylallyl diphosphate + 2 oxidized [2Fe-2S]-[ferredoxin] + H2O = (2E)-4-hydroxy-3-methylbut-2-enyl diphosphate + 2 reduced [2Fe-2S]-[ferredoxin] + 2 H(+). It participates in isoprenoid biosynthesis; dimethylallyl diphosphate biosynthesis; dimethylallyl diphosphate from (2E)-4-hydroxy-3-methylbutenyl diphosphate: step 1/1. Its pathway is isoprenoid biosynthesis; isopentenyl diphosphate biosynthesis via DXP pathway; isopentenyl diphosphate from 1-deoxy-D-xylulose 5-phosphate: step 6/6. Catalyzes the conversion of 1-hydroxy-2-methyl-2-(E)-butenyl 4-diphosphate (HMBPP) into a mixture of isopentenyl diphosphate (IPP) and dimethylallyl diphosphate (DMAPP). Acts in the terminal step of the DOXP/MEP pathway for isoprenoid precursor biosynthesis. This Campylobacter lari (strain RM2100 / D67 / ATCC BAA-1060) protein is 4-hydroxy-3-methylbut-2-enyl diphosphate reductase.